The sequence spans 517 residues: Cytochrome P450 CYP72A616 (517 aa).

A helical transmembrane segment spans residues 5–25 (VLGALAALLAAAAAWVMRAAA). Residue cysteine 465 participates in heme binding.

Belongs to the cytochrome P450 family. As to expression, mainly expressed in leaves and, at low levels, in roots, fruits and stems.

The protein localises to the membrane. It participates in steroid metabolism; cholesterol metabolism. Its function is as follows. Involved in the biosynthesis of spiroketal steroid and saponin natural products from cholesterol such as diosgenin and analogs (e.g. furostanol and spirostanol), plant defense compounds used as main precursors for the industrial production of steroid hormones. During the 5,6-spiroketalization of cholesterol, may catalyze the 27-monohydroxylation of furostanol-type steroid to an intermediate product that undergoes a stereospecific formation of the terminal heterocycle to yield diosgenin. The chain is Cytochrome P450 CYP72A616 from Paris polyphylla (Daiswa polyphylla).